The sequence spans 792 residues: Phenylalanine--tRNA ligase beta subunit (792 aa).

A tRNA-binding domain is found at 39 to 150 (GDEITNVVTG…ENTPIGKDIK (112 aa)). A B5 domain is found at 404–479 (SEPNIVEVDY…RIYGYNKVPS (76 aa)). 4 residues coordinate Mg(2+): aspartate 457, aspartate 463, glutamate 466, and glutamate 467. Residues 699–792 (PKFPTVTRDI…LEHVLGAELR (94 aa)) form the FDX-ACB domain.

Belongs to the phenylalanyl-tRNA synthetase beta subunit family. Type 1 subfamily. Tetramer of two alpha and two beta subunits. Mg(2+) is required as a cofactor.

Its subcellular location is the cytoplasm. It carries out the reaction tRNA(Phe) + L-phenylalanine + ATP = L-phenylalanyl-tRNA(Phe) + AMP + diphosphate + H(+). The sequence is that of Phenylalanine--tRNA ligase beta subunit from Clostridium acetobutylicum (strain ATCC 824 / DSM 792 / JCM 1419 / IAM 19013 / LMG 5710 / NBRC 13948 / NRRL B-527 / VKM B-1787 / 2291 / W).